We begin with the raw amino-acid sequence, 325 residues long: MEGLEENGGVVQVGELLPCKICGRTFFPVALKKHGPICQKTATKKRKTFDSSRQRAEGTDIPTVKPLKPRPEPPKKPSNWRRKHEEFIATIRAAKGLDQALKEGGKLPPPPPPSYDPDYIQCPYCQRRFNENAADRHINFCKEQAARISNKGKFSTDTKGKPTSRTQVYKPPALKKSNSPGTASSGSSRLPQPSGAGKTVVGVPSGKVSSSSSSLGNKLQTLSPSHKGIAAPHAGANVKPRNSTPPSLARNPAPGVLTNKRKTYTESYIARPDGDCASSLNGGNIKGIEGHSPGNLPKFCHECGTKYPVEWAKFCCECGIRRMIL.

The C2HC/C3H-type 1 zinc finger occupies 15-44 (ELLPCKICGRTFFPVALKKHGPICQKTATK). Positions 19, 22, 34, and 38 each coordinate Zn(2+). The segment at 43 to 83 (TKKRKTFDSSRQRAEGTDIPTVKPLKPRPEPPKKPSNWRRK) is disordered. The span at 48-58 (TFDSSRQRAEG) shows a compositional bias: basic and acidic residues. The C2HC/C3H-type 2 zinc finger occupies 118–147 (DYIQCPYCQRRFNENAADRHINFCKEQAAR). The Zn(2+) site is built by Cys-122, Cys-125, His-137, and Cys-141. The interval 150 to 260 (NKGKFSTDTK…NPAPGVLTNK (111 aa)) is disordered. Low complexity-rich tracts occupy residues 177–188 (SNSPGTASSGSS) and 197–216 (GKTV…SSLG). Ser-223 bears the Phosphoserine mark. Thr-244 carries the phosphothreonine modification. Ser-292 carries the phosphoserine modification.

The protein belongs to the ZC2HC1 family. It depends on Zn(2+) as a cofactor.

The sequence is that of Zinc finger C2HC domain-containing protein 1A (ZC2HC1A) from Homo sapiens (Human).